The sequence spans 112 residues: Larval cuticle protein 4 (112 aa).

Positions 1–16 are cleaved as a signal peptide; the sequence is MFKILLVCALVALVAA. One can recognise a Chitin-binding type R&amp;R domain in the interval 31–92; sequence ADGFVSKLVL…PQSDLLPTPP (62 aa).

In terms of biological role, component of the larval cuticle. The polypeptide is Larval cuticle protein 4 (Lcp4) (Drosophila melanogaster (Fruit fly)).